A 110-amino-acid polypeptide reads, in one-letter code: Putative pterin-4-alpha-carbinolamine dehydratase (110 aa).

It belongs to the pterin-4-alpha-carbinolamine dehydratase family.

It carries out the reaction (4aS,6R)-4a-hydroxy-L-erythro-5,6,7,8-tetrahydrobiopterin = (6R)-L-erythro-6,7-dihydrobiopterin + H2O. This chain is Putative pterin-4-alpha-carbinolamine dehydratase, found in Vibrio vulnificus (strain CMCP6).